The primary structure comprises 339 residues: HTH-type transcriptional regulator PtxS (339 aa).

One can recognise an HTH lacI-type domain in the interval 12 to 67; that stretch reads VTISEVARVAGVSKATVSRYIGGDRQLLAEATAKRLEEVIERLGYRPNQMARGLKR. A DNA-binding region (H-T-H motif) is located at residues 14–33; the sequence is ISEVARVAGVSKATVSRYIG.

Homodimer in solution.

Its activity is regulated as follows. 2-ketogluconate acts as a molecular effector and causes dissociation of PtxS from its target promoter. Its function is as follows. Negatively regulates glucose metabolism by binding directly to the promoter region of the kgu and gad operons. It also negatively regulates its own synthesis. This is HTH-type transcriptional regulator PtxS from Pseudomonas putida (strain ATCC 47054 / DSM 6125 / CFBP 8728 / NCIMB 11950 / KT2440).